Here is a 350-residue protein sequence, read N- to C-terminus: Phosphotriesterase-related protein (350 aa).

Residues H22, H24, E169, H201, H230, and D298 each coordinate a divalent metal cation.

The protein belongs to the metallo-dependent hydrolases superfamily. Phosphotriesterase family. A divalent metal cation is required as a cofactor.

The protein is Phosphotriesterase-related protein of Drosophila erecta (Fruit fly).